We begin with the raw amino-acid sequence, 256 residues long: Ubiquinone/menaquinone biosynthesis C-methyltransferase UbiE (256 aa).

Residues 1 to 12 show a composition bias toward basic and acidic residues; sequence MNDQRKGDHAEP. Residues 1–22 form a disordered region; the sequence is MNDQRKGDHAEPTTHFGYQDVP. S-adenosyl-L-methionine contacts are provided by residues Thr-79, Asp-100, and 128-129; that span reads DA.

It belongs to the class I-like SAM-binding methyltransferase superfamily. MenG/UbiE family.

It carries out the reaction a 2-demethylmenaquinol + S-adenosyl-L-methionine = a menaquinol + S-adenosyl-L-homocysteine + H(+). The enzyme catalyses a 2-methoxy-6-(all-trans-polyprenyl)benzene-1,4-diol + S-adenosyl-L-methionine = a 5-methoxy-2-methyl-3-(all-trans-polyprenyl)benzene-1,4-diol + S-adenosyl-L-homocysteine + H(+). The protein operates within quinol/quinone metabolism; menaquinone biosynthesis; menaquinol from 1,4-dihydroxy-2-naphthoate: step 2/2. It participates in cofactor biosynthesis; ubiquinone biosynthesis. Methyltransferase required for the conversion of demethylmenaquinol (DMKH2) to menaquinol (MKH2) and the conversion of 2-polyprenyl-6-methoxy-1,4-benzoquinol (DDMQH2) to 2-polyprenyl-3-methyl-6-methoxy-1,4-benzoquinol (DMQH2). This Pseudomonas putida (Arthrobacter siderocapsulatus) protein is Ubiquinone/menaquinone biosynthesis C-methyltransferase UbiE.